Consider the following 928-residue polypeptide: DNA polymerase I (928 aa).

The 5'-3' exonuclease domain occupies 1–323; the sequence is MVQIPENPLI…IDESPSEPAA (323 aa). Positions 324–517 constitute a 3'-5' exonuclease domain; the sequence is ALSYENYVTI…LHLKMWPELQ (194 aa). Residues 324–928 form a klenow fragment region; it reads ALSYENYVTI…GSGENWDQAH (605 aa). Positions 521–928 are polymerase; sequence GPLNVFENIE…GSGENWDQAH (408 aa).

Belongs to the DNA polymerase type-A family. In terms of assembly, single-chain monomer with multiple functions.

The catalysed reaction is DNA(n) + a 2'-deoxyribonucleoside 5'-triphosphate = DNA(n+1) + diphosphate. In addition to polymerase activity, this DNA polymerase exhibits 3'-5' and 5'-3' exonuclease activity. It is able to utilize nicked circular duplex DNA as a template and can unwind the parental DNA strand from its template. The polypeptide is DNA polymerase I (polA) (Salmonella typhimurium (strain LT2 / SGSC1412 / ATCC 700720)).